The chain runs to 287 residues: Large ribosomal subunit protein uL2 (287 aa).

The disordered stretch occupies residues 221-287; the sequence is RGSVMNPCDH…SKRSRGGRDS (67 aa). A compositionally biased stretch (basic residues) spans 258–287; that stretch reads KTRKRNKPSNRYVLRKRRKTSKRSRGGRDS.

Belongs to the universal ribosomal protein uL2 family. Part of the 50S ribosomal subunit. Forms a bridge to the 30S subunit in the 70S ribosome.

In terms of biological role, one of the primary rRNA binding proteins. Required for association of the 30S and 50S subunits to form the 70S ribosome, for tRNA binding and peptide bond formation. It has been suggested to have peptidyltransferase activity; this is somewhat controversial. Makes several contacts with the 16S rRNA in the 70S ribosome. The sequence is that of Large ribosomal subunit protein uL2 from Parasynechococcus marenigrum (strain WH8102).